The chain runs to 592 residues: Pectinesterase/pectinesterase inhibitor 3 (592 aa).

A signal peptide spans 1–35; that stretch reads MAPSMKEIFSKDNFKKNKKLVLLSAAVALLFVAAV. Residues 36 to 238 constitute a propeptide, removed in mature 42 kDa form; the sequence is AGISAGASKA…KITSNNRKLK (203 aa). Residues 36 to 273 constitute a propeptide, removed in mature 38 kDa form; it reads AGISAGASKA…WLSAGDRRLL (238 aa). A pectinesterase inhibitor 3 region spans residues 53–212; it reads PSSHAVLRSS…EHMCSNALAM (160 aa). Asn-96 and Asn-215 each carry an N-linked (GlcNAc...) asparagine glycan. Residues 281–578 form a pectinesterase 3 region; sequence DATVAADGSG…YTAGQFIGGG (298 aa). Substrate contacts are provided by Thr-356 and Gln-386. Asp-409 (proton donor; for pectinesterase activity) is an active-site residue. Cys-423 and Cys-443 form a disulfide bridge. Asp-430 acts as the Nucleophile; for pectinesterase activity in catalysis. Residues Gln-454, Arg-498, and Trp-500 each coordinate substrate.

It in the N-terminal section; belongs to the PMEI family. In the C-terminal section; belongs to the pectinesterase family. Interacts with BIIDXI and At5g11420. Binds reversibly to PMEI4, PMEI7 and PMEI8 to be inhibited; the stability of the PME3-PMEIs complexes and the inhibition of the pectin methylesterase (PME) activity is pH-dependent, based on protonation status of amino-acids at the complex interface. As to expression, expressed in roots, cotyledons, hypocotyls, seedlings, leaves, stems, flowers, dry seeds and siliques. Accumulates in etiolated hypocotyls (at protein level).

The protein localises to the secreted. It localises to the extracellular space. The protein resides in the apoplast. It is found in the cell wall. It carries out the reaction [(1-&gt;4)-alpha-D-galacturonosyl methyl ester](n) + n H2O = [(1-&gt;4)-alpha-D-galacturonosyl](n) + n methanol + n H(+). It functions in the pathway glycan metabolism; pectin degradation; 2-dehydro-3-deoxy-D-gluconate from pectin: step 1/5. With respect to regulation, regulated negatively by pectinesterase inhibitors (e.g. PMEI3, PMEI4, PMEI7 and PMEI9) in a pH-dependent manner, mainly in slightly acidic conditions (pH 6.0 and 5.0), especially in dark-grown hypocotyls; this processus relies on changes in the protonation of amino acids involved in intermolecular and intramolecular interactions. Functionally, acts in the modification of cell walls via demethylesterification of cell wall pectin. Required for zinc Zn(2+) homeostasis and to monitor Zn(2+) influence on cell wall-controlled growth processes such as root cell elongation. Monitors seed germination and favors root hairs production. Prevents cruciferin seed storage proteins activity, but promotes the expression of genes involved in cell wall organization and remodeling as well as genes involved in lipid and protein metabolism, during post-germinative growth of seedlings. Confers sensitivity to Zn(2+) when overexpressed. Acts as a susceptibility factor required for the initial colonization of the host tissue by virulent pathogens including Botrytis cinerea and Pectobacterium carotovorum, probably by facilitating cell wall pectine degradation by pathogen pectic enzymes after its demethylesterification. This Arabidopsis thaliana (Mouse-ear cress) protein is Pectinesterase/pectinesterase inhibitor 3.